Consider the following 429-residue polypeptide: Protein arginine N-methyltransferase 2 (429 aa).

2 disordered regions span residues 41 to 76 and 137 to 180; these read PEVA…EDHE and ALDS…EETP. Residues 137–163 show a composition bias toward acidic residues; sequence ALDSDDEDDEEMAEGEEAQAEDGEEAP. Residues 164–174 are compositionally biased toward low complexity; the sequence is ELVAAEEATQT. In terms of domain architecture, RMT2 spans 190–429; that stretch reads LEEQVTSDKY…YRLPVCTFLG (240 aa). Residues Tyr199, Met228, 250–255, 271–273, 308–309, and Asp328 each bind S-adenosyl-L-methionine; these read FGMGII, EAH, and WQ.

Belongs to the class I-like SAM-binding methyltransferase superfamily. RMT2 methyltransferase family. In terms of assembly, monomer.

It is found in the cytoplasm. Its subcellular location is the nucleus. Functionally, S-adenosyl-L-methionine-dependent protein-arginine N-methyltransferase that methylates the delta-nitrogen atom of arginine residues to form N5-methylarginine (type IV) in target proteins. Monomethylates ribosomal protein L12. This is Protein arginine N-methyltransferase 2 from Neurospora crassa (strain ATCC 24698 / 74-OR23-1A / CBS 708.71 / DSM 1257 / FGSC 987).